We begin with the raw amino-acid sequence, 183 residues long: Probable RNA 2'-phosphotransferase (183 aa).

The protein belongs to the KptA/TPT1 family.

In terms of biological role, removes the 2'-phosphate from RNA via an intermediate in which the phosphate is ADP-ribosylated by NAD followed by a presumed transesterification to release the RNA and generate ADP-ribose 1''-2''-cyclic phosphate (APPR&gt;P). May function as an ADP-ribosylase. In Pyrococcus furiosus (strain ATCC 43587 / DSM 3638 / JCM 8422 / Vc1), this protein is Probable RNA 2'-phosphotransferase.